Here is a 604-residue protein sequence, read N- to C-terminus: Glutamine--fructose-6-phosphate aminotransferase [isomerizing] (604 aa).

Catalysis depends on Cys-2, which acts as the Nucleophile; for GATase activity. The Glutamine amidotransferase type-2 domain maps to 2-216 (CGIVGYVGFR…DGDVVRLTRE (215 aa)). SIS domains follow at residues 281 to 420 (LALD…GRGA) and 453 to 594 (VAEK…VDQP). The For Fru-6P isomerization activity role is filled by Lys-599.

Homodimer.

The protein resides in the cytoplasm. The catalysed reaction is D-fructose 6-phosphate + L-glutamine = D-glucosamine 6-phosphate + L-glutamate. Its function is as follows. Catalyzes the first step in hexosamine metabolism, converting fructose-6P into glucosamine-6P using glutamine as a nitrogen source. This Thermus thermophilus (strain ATCC 27634 / DSM 579 / HB8) protein is Glutamine--fructose-6-phosphate aminotransferase [isomerizing].